A 103-amino-acid chain; its full sequence is Large ribosomal subunit protein bL21 (103 aa).

The protein belongs to the bacterial ribosomal protein bL21 family. Part of the 50S ribosomal subunit. Contacts protein L20.

Its function is as follows. This protein binds to 23S rRNA in the presence of protein L20. The sequence is that of Large ribosomal subunit protein bL21 from Polaromonas sp. (strain JS666 / ATCC BAA-500).